The chain runs to 252 residues: MGLCKCPKKKVTNQFCFEHRVNVCEYCLVSSHSRCIVKSYLHWLQDSDYNPVCTLCNGNLSDGDVVRLICYDVFHLSCINNFAQSLPPNTAPAGYTCPNCKNGIFPPEKMVSPVVEQLKQKLSATSWAKAGLGIPVAPLEPLLFSSTVSRKIPEKRPEESLNTSVDHDENKYQRRGAIDWFSRWFGNRVNTKKQTYDDPNASLKRTMMIFFLVILAFVTVTVIFTRVGRNAAANDPFLDPRSNPHIRVEKDS.

The B box-type; degenerate zinc finger occupies 1 to 43 (MGLCKCPKKKVTNQFCFEHRVNVCEYCLVSSHSRCIVKSYLHW). An RING-type; degenerate zinc finger spans residues 53–101 (CTLCNGNLSDGDVVRLICYDVFHLSCINNFAQSLPPNTAPAGYTCPNCK). Residues 207–227 (MMIFFLVILAFVTVTVIFTRV) form a helical membrane-spanning segment.

It belongs to the ZFPL1 family.

It localises to the membrane. The protein is Zinc finger protein-like 1 homolog (zfpl1) of Nematostella vectensis (Starlet sea anemone).